Reading from the N-terminus, the 212-residue chain is Dephospho-CoA kinase (212 aa).

One can recognise a DPCK domain in the interval 6–211 (RLGLTGGIGS…LSCQPLSPNQ (206 aa)). An ATP-binding site is contributed by 14 to 19 (GSGKST).

This sequence belongs to the CoaE family.

The protein resides in the cytoplasm. The enzyme catalyses 3'-dephospho-CoA + ATP = ADP + CoA + H(+). Its pathway is cofactor biosynthesis; coenzyme A biosynthesis; CoA from (R)-pantothenate: step 5/5. Functionally, catalyzes the phosphorylation of the 3'-hydroxyl group of dephosphocoenzyme A to form coenzyme A. The chain is Dephospho-CoA kinase from Albidiferax ferrireducens (strain ATCC BAA-621 / DSM 15236 / T118) (Rhodoferax ferrireducens).